The following is a 168-amino-acid chain: Cyclin-dependent kinase 4 inhibitor C (168 aa).

ANK repeat units lie at residues 4-33 (PWGN…NVNA), 37-65 (FGRT…NPNL), 69-98 (TGFA…DVNI), 102-132 (EGNL…NVGH), and 136-165 (KGDT…GGAT).

Belongs to the CDKN2 cyclin-dependent kinase inhibitor family. As to quaternary structure, heterodimer of p18 with CDK6.

Its function is as follows. Interacts strongly with CDK6, weakly with CDK4. Inhibits cell growth and proliferation with a correlated dependence on endogenous retinoblastoma protein RB. The chain is Cyclin-dependent kinase 4 inhibitor C (Cdkn2c) from Mus musculus (Mouse).